A 612-amino-acid polypeptide reads, in one-letter code: Breast cancer type 1 susceptibility protein homolog (612 aa).

The RING-type zinc finger occupies 21–61 (CGICCSTYKDPILSTCFHIFCRSCINACFERKRKVQCPICR). The disordered stretch occupies residues 140 to 173 (RRKRPSRPQPPSAFAEEPAEPVEPPEPATKQPVE). BRCT domains lie at 415-477 (RFAE…DYTI) and 505-603 (EHGK…PYKA).

Heterodimer (via RING-type zinc finger) with brd-1 to form the core CeBCD complex. Brc-1-brd-1 heterodimer-containing CeBCD complexes bound to chromatin are activated as an E3-ubiquitin ligase in response to DNA damage. The heterodimer interacts with the recombinase rad-51 following ionizing irradiation; the interaction is direct. The heterodimer interacts the E2-ubiquitin-conjugating enzyme let-70 following ionizing irradiation. The heterodimer interacts with the pro-crossover proteins msh-5 and syp-3. Post-translationally, phosphorylation of CeBCD complexes is required for E3 ubiquitin-protein ligase activity.

It is found in the nucleus. It localises to the chromosome. The protein localises to the cytoplasm. The catalysed reaction is S-ubiquitinyl-[E2 ubiquitin-conjugating enzyme]-L-cysteine + [acceptor protein]-L-lysine = [E2 ubiquitin-conjugating enzyme]-L-cysteine + N(6)-ubiquitinyl-[acceptor protein]-L-lysine.. It participates in protein modification; protein ubiquitination. E3 ubiquitin-protein ligase activity of CeBCD complexes occurs at DNA damage sites. Following DNA damage, E3 ubiquitin-protein ligase activity is reduced by caffeine treatment (inhibitor of ATM and ATK kinase activity). In terms of biological role, E3 ubiquitin-protein ligase that specifically mediates the formation of polyubiquitin chains and plays a central role in DNA repair. Plays a role in triggering cellular responses at damage sites in response to DNA damage that may be induced by UV and ionizing radiation for example. Functions in double-strand break repair, and is required for homologous recombination between sister chromatids in meiotic and mitotic cells. In particular, protects against chromosome non-disjunction and nuclear fragmentation during meiotic double-strand break repair to ensure sister chromatid recombination and aid chromosome stability. Required for normal cell cycle progression. Along with brap-2 modulates the expression of cell cycle arrest protein cki-1 in response to increased levels of reactive oxygen species. Constituent of the CeBCD complex that possesses E3 ubiquitin-protein ligase activity. When bound to chromatin, the brc-1-brd-1 heterodimer within the CeBCD complex is inactive during normal conditions, but in response to DNA damage, the brc-1-brd-1 heterodimer associates with other proteins such as the recombinase rad-51 or the E2-ubiquitin-conjugating enzyme let-70, which activate the CeBCD complex as an E3-ubiquitin ligase. Moreover, association between the brc-1-brd-1 heterodimer and rad-51 and let-70, probably requires DNA checkpoint proteins such as atl-1 and mre-11 in order to induce ubiquitination at DNA damage sites. To this end, the brc-1-brd-1 heterodimer coordinates a diverse range of cellular pathways such as DNA damage repair, ubiquitination and transcriptional regulation to maintain genomic stability. In Caenorhabditis elegans, this protein is Breast cancer type 1 susceptibility protein homolog.